The following is a 75-amino-acid chain: UPF0346 protein OB1736 (75 aa).

Belongs to the UPF0346 family.

The sequence is that of UPF0346 protein OB1736 from Oceanobacillus iheyensis (strain DSM 14371 / CIP 107618 / JCM 11309 / KCTC 3954 / HTE831).